A 759-amino-acid polypeptide reads, in one-letter code: Cullin-4A (759 aa).

Lys8 is covalently cross-linked (Glycyl lysine isopeptide (Lys-Gly) (interchain with G-Cter in SUMO2)). Ser10 carries the post-translational modification Phosphoserine. Residue Lys33 forms a Glycyl lysine isopeptide (Lys-Gly) (interchain with G-Cter in ubiquitin) linkage. A Cullin neddylation domain is found at Asp691–Asn751. Lys705 participates in a covalent cross-link: Glycyl lysine isopeptide (Lys-Gly) (interchain with G-Cter in NEDD8).

This sequence belongs to the cullin family. As to quaternary structure, can self-associate. Component of multiple DCX (DDB1-CUL4-X-box) E3 ubiquitin-protein ligase complexes that seem to consist of DDB1, CUL4A or CUL4B, RBX1 and a variable substrate recognition component which seems to belong to a protein family described as DCAF (Ddb1- and Cul4-associated factor) or CDW (CUL4-DDB1-associated WD40-repeat) proteins. Component of the CSA complex (DCX(ERCC8) complex) containing ERCC8, RBX1, DDB1 and CUL4A; the CSA complex interacts with RNA polymerase II; upon UV irradiation it interacts with the COP9 signalosome and preferentially with the hyperphosphorylated form of RNA polymerase II. Component of the DCX(DET1-COP1) complex with the substrate recognition component DET1 and COP1. Component of the DCX(DDB2) complex with the substrate recognition component DDB2. Component of the DCX(DTL) complex with the putative substrate recognition component DTL. Component of DCX complexes part of the DesCEND (destruction via C-end degrons) pathway, which contain either TRPC4AP or DCAF12 as substrate-recognition component. Component of the DCX(AMBRA1) complex with the substrate recognition component AMBRA1. Interacts with DDB1, RBX1, RNF7, CDT1, TIP120A/CAND1, SKP2, CDKN1B, MDM2, TP53 and HOXA9. Interacts with DDB2; the interactions with DDB2 and CAND1 are mutually exclusive. Interacts with DCAF1, DTL, DDA1, DCAF6, DCAF4, DCAF16, DCAF17, DET1, WDTC1, DCAF5, DCAF11, WDR24A, COP1, PAFAH1B1, ERCC8, GRWD1, FBXW5, RBBP7, GNB2, WSB1, WSB2, NUP43, PWP1, FBXW8, ATG16L1, KATNB1, RBBP4, RBBP5, LRWD1 and DCAF8. May interact with WDR26, WDR51B, SNRNP40, WDR61, WDR76, WDR5. Interacts (when neddylated) with ARIH1; leading to activate the E3 ligase activity of ARIH1. The DDB1-CUL4A complex interacts with CRY1. Interacts (unneddylated form) with DCUN1D1, DCUN1D2, DCUN1D3, DCUN1D4 and DCUN1D5; these interactions promote the cullin neddylation. In terms of assembly, (Microbial infection) Interacts with Epstein-Barr virus BPLF1. In terms of processing, neddylated; required for activity of cullin-RING-based E3 ubiquitin-protein ligase complexes. Deneddylated via its interaction with the COP9 signalosome (CSN) complex. (Microbial infection) Deneddylated by Epstein-Barr virus BPLF1 leading to a S-phase-like environment that is required for efficient replication of the viral genome.

The protein operates within protein modification; protein ubiquitination. Core component of multiple cullin-RING-based E3 ubiquitin-protein ligase complexes which mediate the ubiquitination of target proteins. As a scaffold protein may contribute to catalysis through positioning of the substrate and the ubiquitin-conjugating enzyme. The E3 ubiquitin-protein ligase activity of the complex is dependent on the neddylation of the cullin subunit and is inhibited by the association of the deneddylated cullin subunit with TIP120A/CAND1. The functional specificity of the E3 ubiquitin-protein ligase complex depends on the variable substrate recognition component. DCX(DET1-COP1) directs ubiquitination of JUN. DCX(DDB2) directs ubiquitination of XPC. DCX(DDB2) ubiquitinates histones H3-H4 and is required for efficient histone deposition during replication-coupled (H3.1) and replication-independent (H3.3) nucleosome assembly, probably by facilitating the transfer of H3 from ASF1A/ASF1B to other chaperones involved in histone deposition. DCX(DTL) plays a role in PCNA-dependent polyubiquitination of CDT1 and MDM2-dependent ubiquitination of p53/TP53 in response to radiation-induced DNA damage and during DNA replication. DCX(DTL) directs autoubiquitination of DTL. In association with DDB1 and SKP2 probably is involved in ubiquitination of CDKN1B/p27kip. Is involved in ubiquitination of HOXA9. The DDB1-CUL4A-DTL E3 ligase complex regulates the circadian clock function by mediating the ubiquitination and degradation of CRY1. The DCX(ERCC8) complex (also named CSA complex) plays a role in transcription-coupled repair (TCR). A number of DCX complexes (containing either TRPC4AP or DCAF12 as substrate-recognition component) are part of the DesCEND (destruction via C-end degrons) pathway, which recognizes a C-degron located at the extreme C terminus of target proteins, leading to their ubiquitination and degradation. The DCX(AMBRA1) complex is a master regulator of the transition from G1 to S cell phase by mediating ubiquitination of phosphorylated cyclin-D (CCND1, CCND2 and CCND3). The DCX(AMBRA1) complex also acts as a regulator of Cul5-RING (CRL5) E3 ubiquitin-protein ligase complexes by mediating ubiquitination and degradation of Elongin-C (ELOC) component of CRL5 complexes. With CUL4B, contributes to ribosome biogenesis. This is Cullin-4A from Homo sapiens (Human).